The following is a 1028-amino-acid chain: Sodium/potassium-transporting ATPase subunit alpha-4 (1028 aa).

Residues 1–36 are disordered; it reads MEPGKETAATSEQKPRPTLRASNTNRQPKVKRRKKD. The Cytoplasmic portion of the chain corresponds to 1–92; it reads MEPGKETAAT…NVLTPPPTTP (92 aa). The interaction with phosphoinositide-3 kinase stretch occupies residues 87 to 89; that stretch reads PPP. The chain crosses the membrane as a helical span at residues 93–113; it reads EWIKFCKQLFGGFSLLLWTGS. Over 114–137 the chain is Extracellular; that stretch reads LLCFLAYGIHVSYYQENANKDNLY. The helical transmembrane segment at 138–158 threads the bilayer; the sequence is LGIVLSAVVIITGCFSYYQEA. At 159-294 the chain is on the cytoplasmic side; the sequence is KSSKIMESFK…MGKTPIATEI (136 aa). The chain crosses the membrane as a helical span at residues 295–314; the sequence is EHFIHIITAVAVFLGVTFFF. Residues 315–326 lie on the Extracellular side of the membrane; it reads LSLILGYTWLDA. The chain crosses the membrane as a helical span at residues 327-344; it reads VIFLIGIIVANVPEGLLA. At 345–777 the chain is on the cytoplasmic side; sequence TVTVCLTLTA…EEGRLIFDNL (433 aa). Asp-382 acts as the 4-aspartylphosphate intermediate in catalysis. The Mg(2+) site is built by Asp-722 and Asp-726. Residues 778–797 traverse the membrane as a helical segment; that stretch reads KKSIAYTLTSNIPEITPFLL. Residues 798–807 are Extracellular-facing; the sequence is FIVLSIPLPL. A helical membrane pass occupies residues 808-828; sequence GTITILCIDLGTDMVPAISLA. The Cytoplasmic portion of the chain corresponds to 829–848; sequence YETPESDIMKRLPRNPKTDN. The chain crosses the membrane as a helical span at residues 849-871; sequence LVNDRLIGMAYGQIGMIQALAGF. Topologically, residues 872 to 923 are extracellular; it reads FTYFVILAENGFKPLDLLGIRLYWDDTNLNDLEDTYGQQWTYEQRKVVEFTC. A helical membrane pass occupies residues 924-943; sequence QTAFFISIVIVQWADLIICK. The Cytoplasmic portion of the chain corresponds to 944-956; the sequence is TRRNSLFKQGMKN. Ser-948 is modified (phosphoserine; by PKA). The helical transmembrane segment at 957-975 threads the bilayer; it reads KVLIFGLLEETILAACLSY. Residues 976 to 990 lie on the Extracellular side of the membrane; the sequence is IPGMDVALRMYPLKI. A helical transmembrane segment spans residues 991-1011; that stretch reads NWWFCALPYSVLIFIYDEVRK. Residues 1012-1028 are Cytoplasmic-facing; it reads LIIRRRPGGWLEKETYY.

It belongs to the cation transport ATPase (P-type) (TC 3.A.3) family. Type IIC subfamily. As to quaternary structure, the sodium/potassium-transporting ATPase is composed of a catalytic alpha subunit, an auxiliary non-catalytic beta subunit and an additional regulatory subunit.

The protein resides in the cell membrane. The enzyme catalyses K(+)(out) + Na(+)(in) + ATP + H2O = K(+)(in) + Na(+)(out) + ADP + phosphate + H(+). With respect to regulation, specifically inhibited by an endogenous cardiac glycoside, ouabain. Functionally, this is the catalytic component of the active enzyme, which catalyzes the hydrolysis of ATP coupled with the exchange of sodium and potassium ions across the plasma membrane. This action creates the electrochemical gradient of sodium and potassium ions, providing the energy for active transport of various nutrients. Plays a role in sperm motility. In Rattus norvegicus (Rat), this protein is Sodium/potassium-transporting ATPase subunit alpha-4 (Atp1a4).